A 360-amino-acid polypeptide reads, in one-letter code: Tryptophan--tRNA ligase, mitochondrial (360 aa).

ATP-binding positions include Gln-38 and 44-47 (HLGN). Residues 39-47 (PTGIPHLGN) carry the 'HIGH' region motif. Position 168 (Asp-168) interacts with L-tryptophan. Residues 180–182 (GED) and 229–233 (KMSKS) each bind ATP. Residues 220–230 (IRSLREPEKKM) show a composition bias toward basic and acidic residues. The disordered stretch occupies residues 220–241 (IRSLREPEKKMSKSSGGPRSRI). The 'KMSKS' region signature appears at 229-233 (KMSKS).

This sequence belongs to the class-I aminoacyl-tRNA synthetase family.

It localises to the mitochondrion matrix. It carries out the reaction tRNA(Trp) + L-tryptophan + ATP = L-tryptophyl-tRNA(Trp) + AMP + diphosphate + H(+). Its function is as follows. Catalyzes the attachment of tryptophan to tRNA(Trp). The polypeptide is Tryptophan--tRNA ligase, mitochondrial (Caenorhabditis elegans).